We begin with the raw amino-acid sequence, 602 residues long: Sodium- and chloride-dependent GABA transporter 2 (602 aa).

The Cytoplasmic portion of the chain corresponds to 1–40 (MDNRVSGTTSNGETKPVCPVMEKVEEDGTLEREQWTNKME). 3 helical membrane passes run 41 to 61 (FVLS…FPYL), 68 to 88 (GAFF…VFFL), and 121 to 141 (IVSL…FYLF). Over 142 to 206 (SSFTTDLPWG…GIQHLGSLRW (65 aa)) the chain is Extracellular. The cysteines at positions 153 and 162 are disulfide-linked. N-linked (GlcNAc...) asparagine glycosylation is found at N169, N173, and N178. 2 consecutive transmembrane segments (helical) span residues 207–227 (ELVL…WKGV) and 233–253 (VVYF…IRGV). A glycan (N-linked (GlcNAc...) asparagine) is linked at N269. 7 helical membrane-spanning segments follow: residues 282-302 (AGTQ…ALGS), 319-339 (ILNS…LGFM), 366-386 (VVML…VVLL), 418-438 (ILIL…LTEG), 453-473 (GMCL…VYGA), 490-510 (PLIK…TFLF), and 528-548 (WWGD…IPAW). Residues 549-602 (SIYKLRTLKGPLRERLRQLVCPAEDLPQKSQPELTSPATPMTSLLRLTELESNC) lie on the Cytoplasmic side of the membrane. Residue T587 is modified to Phosphothreonine. S591 carries the phosphoserine modification.

The protein belongs to the sodium:neurotransmitter symporter (SNF) (TC 2.A.22) family. SLC6A13 subfamily. Brain, retina, and peripheral tissues. Expressed in hepatocytes (at protein level).

The protein localises to the cell membrane. The protein resides in the basolateral cell membrane. It catalyses the reaction 4-aminobutanoate(out) + chloride(out) + 2 Na(+)(out) = 4-aminobutanoate(in) + chloride(in) + 2 Na(+)(in). It carries out the reaction taurine(out) + chloride(out) + 2 Na(+)(out) = taurine(in) + chloride(in) + 2 Na(+)(in). The enzyme catalyses beta-alanine(out) + chloride(out) + 2 Na(+)(out) = beta-alanine(in) + chloride(in) + 2 Na(+)(in). The catalysed reaction is hypotaurine(out) + chloride(out) + 2 Na(+)(out) = hypotaurine(in) + chloride(in) + 2 Na(+)(in). GABA transport is inhibited by beta-alanine, L-2,4-Diaminobutyric acid, hypotaurine and nipecotic acid. Taurine transport is inhibited by hypotaurine, beta-alanine and nipecotic acid. Its function is as follows. Mediates sodium- and chloride-dependent transport of gamma-aminobutyric acid (GABA). Mediates transport of taurine and is the major taurine transporter in hepatocytes. Can also mediate transport of beta-alanine and hypotaurine. The sequence is that of Sodium- and chloride-dependent GABA transporter 2 (Slc6a13) from Rattus norvegicus (Rat).